Consider the following 545-residue polypeptide: External NADH-ubiquinone oxidoreductase 2, mitochondrial (545 aa).

Residues 1–21 (MLPRLGFARTARSIHRFKMTQ) constitute a mitochondrion transit peptide. Residue 99 to 129 (ELVILGTGWGAISLLKKLDTSLYNVTVVSPR) coordinates FAD. Residue 260-296 (LTFVVVGGGPTGVEFAAELQDYINQDLRKWMPDLSKE) participates in NAD(+) binding.

It belongs to the NADH dehydrogenase family.

The protein resides in the mitochondrion intermembrane space. It carries out the reaction a quinone + NADH + H(+) = a quinol + NAD(+). The enzyme catalyses a ubiquinone + NADH + H(+) = a ubiquinol + NAD(+). Functionally, external NADH dehydrogenase required for optimum cellular growth with a number of nonfermentable carbon sources, including ethanol. With NDE1, performes the mitochondrial oxidation of cytosolic NADH under these growth conditions. Regulates the mitochondrial glycerol-3-phosphate dehydrogenase, GUT2, also involved in cytosolic NADH oxidation. In Saccharomyces cerevisiae (strain ATCC 204508 / S288c) (Baker's yeast), this protein is External NADH-ubiquinone oxidoreductase 2, mitochondrial (NDE2).